The sequence spans 1000 residues: Vacuolar sorting protein 39 (1000 aa).

Positions 16–282 (PARIDAVESY…RRLVKSNNAV (267 aa)) constitute a CNH domain. A disordered region spans residues 394–413 (DEASLSRGSSGISDDMESSS). One copy of the CHCR repeat lies at 607–796 (YSMLVLESCP…YLNPKKSAKD (190 aa)). Positions 844 to 864 (GLSSSTDSGRSDVDTEEPLEE) are disordered.

Belongs to the VAM6/VPS39 family. In terms of assembly, homooligomer. Component of the homotypic fusion and vacuole protein sorting (HOPS) complex composed of the class C Vps core proteins VPS11, VCL1, VPS18 and VPS33, which in HOPS further associates with VPS39 and VPS41. Interacts directly with VPS11. Binds to RABG3B.

Its subcellular location is the cytoplasm. The protein localises to the vacuole membrane. Functionally, essential protein required during embryogenesis. Believed to act in part as a component of the putative HOPS endosomal tethering complex. HOPS is required for the central vacuole formation. May play a role in clustering and fusion of late endosomes and lysosomes. Plays a role in vesicle-mediated protein trafficking to lysosomal compartments including the endocytic membrane transport and autophagic pathways. Required for fusion of endosomes and autophagosomes with lysosomes. This Arabidopsis thaliana (Mouse-ear cress) protein is Vacuolar sorting protein 39.